The following is a 444-amino-acid chain: Trigger factor (444 aa).

The 86-residue stretch at glycine 161–proline 246 folds into the PPIase FKBP-type domain.

This sequence belongs to the FKBP-type PPIase family. Tig subfamily.

It localises to the cytoplasm. The catalysed reaction is [protein]-peptidylproline (omega=180) = [protein]-peptidylproline (omega=0). Its function is as follows. Involved in protein export. Acts as a chaperone by maintaining the newly synthesized protein in an open conformation. Functions as a peptidyl-prolyl cis-trans isomerase. In Saccharophagus degradans (strain 2-40 / ATCC 43961 / DSM 17024), this protein is Trigger factor.